We begin with the raw amino-acid sequence, 83 residues long: MAEAATTDVKKLSFERALEELETIVKRLEDGKVPLEESVTIYERGEALKRRCEDLLRQAEARVDKITTDAQGAPTGTEPLDVQ.

Belongs to the XseB family. In terms of assembly, heterooligomer composed of large and small subunits.

It localises to the cytoplasm. The enzyme catalyses Exonucleolytic cleavage in either 5'- to 3'- or 3'- to 5'-direction to yield nucleoside 5'-phosphates.. Functionally, bidirectionally degrades single-stranded DNA into large acid-insoluble oligonucleotides, which are then degraded further into small acid-soluble oligonucleotides. This is Exodeoxyribonuclease 7 small subunit from Rhodopseudomonas palustris (strain ATCC BAA-98 / CGA009).